We begin with the raw amino-acid sequence, 307 residues long: Phosphonates import ATP-binding protein PhnC (307 aa).

Residues Ile4–Ala252 form the ABC transporter domain. Gly37 to Ser44 serves as a coordination point for ATP. A compositionally biased stretch (basic and acidic residues) spans Ala265–Arg275. The tract at residues Ala265–Arg307 is disordered.

Belongs to the ABC transporter superfamily. Phosphonates importer (TC 3.A.1.9.1) family. The complex is composed of two ATP-binding proteins (PhnC), two transmembrane proteins (PhnE) and a solute-binding protein (PhnD).

Its subcellular location is the cell inner membrane. The enzyme catalyses phosphonate(out) + ATP + H2O = phosphonate(in) + ADP + phosphate + H(+). Part of the ABC transporter complex PhnCDE involved in phosphonates import. Responsible for energy coupling to the transport system. In Burkholderia pseudomallei (strain 1710b), this protein is Phosphonates import ATP-binding protein PhnC.